Reading from the N-terminus, the 639-residue chain is Immunoglobulin-like domain-containing receptor 2 (639 aa).

A signal peptide spans 1-20; it reads MDRVLLRWISLFWLTAMVEG. The Ig-like V-type domain maps to 21–162; that stretch reads LQVTVPDKKK…LEGKNEDSVE (142 aa). The Lumenal portion of the chain corresponds to 21–186; it reads LQVTVPDKKK…PSFAVEIMPE (166 aa). Cys-42 and Cys-145 are disulfide-bonded. A helical membrane pass occupies residues 187 to 207; that stretch reads WVFVGLVLLGVFLFFVLVGIC. Residues 208–639 lie on the Cytoplasmic side of the membrane; the sequence is WCQCCPHSCC…DFPTRMSLVV (432 aa). Disordered regions lie at residues 273 to 295, 374 to 415, and 437 to 639; these read LMDKPHPPPLAPSDSTGGSHSVR, WSGV…MLSR, and YGQR…SLVV. Composition is skewed to basic and acidic residues over residues 393-414 and 442-464; these read YNKEDRESFRHSQPRSKSEMLS and RRADGNSHEARGGSRFERSESRA. Ser-473 is modified (phosphoserine). Basic and acidic residues predominate over residues 483-493; sequence RSREPLTDADR. Residue Arg-544 is modified to Omega-N-methylarginine. Ser-579 carries the phosphoserine modification. The segment covering 606 to 617 has biased composition (basic and acidic residues); that stretch reads RGRDLPYHSNSE.

Belongs to the immunoglobulin superfamily. LISCH7 family. Interacts with MARVELD2 and OCLN. Interacts with P4HB AND HSPA5; the interaction with HSPA5 stabilizes ILDR2 expression. Interacts (via C-terminus) with TRA2A, TRA2B and SRSF1. Expressed in testis, brain, pituitary, colon, heart, nerves, prostate, esophagus, lung liver and small intestine. Highly expressed in macrophages, also expressed in monocytes and at low levels in NK and NKT cells (at protein level).

Its subcellular location is the endoplasmic reticulum membrane. The protein localises to the cell junction. It localises to the tight junction. The protein resides in the nucleus. Functionally, may be involved in ER stress pathways with effects on lipid homeostasis and insulin secretion. With ILDR1 and LSR, involved in the maintain of the epithelial barrier function through the recruitment of MARVELD2/tricellulin to tricellular tight junctions. Also functions as a B7-like protein family member expressed on immune cells and inflamed tissue and with T-cell inhibitory activity. In the inner ear, may regulate alternative pre-mRNA splicing via binding to TRA2A, TRA2B and SRSF1. This chain is Immunoglobulin-like domain-containing receptor 2, found in Homo sapiens (Human).